Reading from the N-terminus, the 129-residue chain is Small ribosomal subunit protein uS11 (129 aa).

The protein belongs to the universal ribosomal protein uS11 family. In terms of assembly, part of the 30S ribosomal subunit. Interacts with proteins S7 and S18. Binds to IF-3.

In terms of biological role, located on the platform of the 30S subunit, it bridges several disparate RNA helices of the 16S rRNA. Forms part of the Shine-Dalgarno cleft in the 70S ribosome. The chain is Small ribosomal subunit protein uS11 from Nitrosospira multiformis (strain ATCC 25196 / NCIMB 11849 / C 71).